The sequence spans 490 residues: Probable cytosol aminopeptidase (490 aa).

Mn(2+) is bound by residues K260 and D265. The active site involves K272. Positions 284, 343, and 345 each coordinate Mn(2+). The active site involves R347.

The protein belongs to the peptidase M17 family. The cofactor is Mn(2+).

It localises to the cytoplasm. The enzyme catalyses Release of an N-terminal amino acid, Xaa-|-Yaa-, in which Xaa is preferably Leu, but may be other amino acids including Pro although not Arg or Lys, and Yaa may be Pro. Amino acid amides and methyl esters are also readily hydrolyzed, but rates on arylamides are exceedingly low.. The catalysed reaction is Release of an N-terminal amino acid, preferentially leucine, but not glutamic or aspartic acids.. Functionally, presumably involved in the processing and regular turnover of intracellular proteins. Catalyzes the removal of unsubstituted N-terminal amino acids from various peptides. The protein is Probable cytosol aminopeptidase of Gloeothece citriformis (strain PCC 7424) (Cyanothece sp. (strain PCC 7424)).